The sequence spans 70 residues: uncharacterized protein (70 aa).

This is an uncharacterized protein from Vaccinia virus (strain Copenhagen) (VACV).